A 383-amino-acid chain; its full sequence is Retrovirus-related Pol polyprotein from type-1 retrotransposable element R1 3 (383 aa).

Residues 1–88 (VDAFADDLLL…DRVRYLGVNV (88 aa)) enclose the Reverse transcriptase domain. The interval 229–383 (LSLHECRELV…VQRMRENEES (155 aa)) is nucleic acid-binding endonuclease.

The enzyme catalyses DNA(n) + a 2'-deoxyribonucleoside 5'-triphosphate = DNA(n+1) + diphosphate. In Nasonia vitripennis (Parasitic wasp), this protein is Retrovirus-related Pol polyprotein from type-1 retrotransposable element R1 3.